A 347-amino-acid chain; its full sequence is NADH-quinone oxidoreductase subunit H (347 aa).

A run of 8 helical transmembrane segments spans residues 21–41 (VAGI…IIYA), 87–107 (GLFL…WAVI), 118–138 (INVG…GVIL), 157–177 (AQMI…VLFA), 195–215 (GIVN…MFLI), 258–278 (NVLL…LPPI), 283–303 (LYAV…FFVF), and 323–343 (WKIF…YLML).

The protein belongs to the complex I subunit 1 family. In terms of assembly, NDH-1 is composed of 14 different subunits. Subunits NuoA, H, J, K, L, M, N constitute the membrane sector of the complex.

Its subcellular location is the cell inner membrane. It carries out the reaction a quinone + NADH + 5 H(+)(in) = a quinol + NAD(+) + 4 H(+)(out). In terms of biological role, NDH-1 shuttles electrons from NADH, via FMN and iron-sulfur (Fe-S) centers, to quinones in the respiratory chain. The immediate electron acceptor for the enzyme in this species is believed to be ubiquinone. Couples the redox reaction to proton translocation (for every two electrons transferred, four hydrogen ions are translocated across the cytoplasmic membrane), and thus conserves the redox energy in a proton gradient. This subunit may bind ubiquinone. The protein is NADH-quinone oxidoreductase subunit H of Sphingopyxis alaskensis (strain DSM 13593 / LMG 18877 / RB2256) (Sphingomonas alaskensis).